The sequence spans 307 residues: Small ribosomal subunit biogenesis GTPase RsgA (307 aa).

Residues 80–237 enclose the CP-type G domain; it reads KADLRQTIVS…IVDTPGIKEF (158 aa). Residues 129-132 and 180-188 each bind GTP; these read NKID and GQSGVGKSS. 4 residues coordinate Zn(2+): Cys-261, Cys-266, His-268, and Cys-274.

It belongs to the TRAFAC class YlqF/YawG GTPase family. RsgA subfamily. As to quaternary structure, monomer. Associates with 30S ribosomal subunit, binds 16S rRNA. Zn(2+) serves as cofactor.

The protein resides in the cytoplasm. Functionally, one of several proteins that assist in the late maturation steps of the functional core of the 30S ribosomal subunit. Helps release RbfA from mature subunits. May play a role in the assembly of ribosomal proteins into the subunit. Circularly permuted GTPase that catalyzes slow GTP hydrolysis, GTPase activity is stimulated by the 30S ribosomal subunit. This Borreliella afzelii (strain PKo) (Borrelia afzelii) protein is Small ribosomal subunit biogenesis GTPase RsgA.